The following is a 67-amino-acid chain: Medusin-H1 (67 aa).

A signal peptide spans 1–22; the sequence is MDFLKKSLFLVLFLGFFSLSIC. Positions 23-48 are excised as a propeptide; sequence EEEKRETEEKENEQEDDREERREEKR. The segment at 24–46 is disordered; it reads EEKRETEEKENEQEDDREERREE. The segment covering 31 to 40 has biased composition (acidic residues); that stretch reads EKENEQEDDR. The residue at position 66 (leucine 66) is a Leucine amide.

Belongs to the frog skin active peptide (FSAP) family. Medusin subfamily. In terms of tissue distribution, expressed by the skin glands.

The protein resides in the secreted. Antimicrobial peptide with activity against Gram-positive bacteria (S.aureus, MIC=32 mg/L) and fungi (C.albicans, MIC=128 mg/L). Shows weak hemolytic activity. This chain is Medusin-H1, found in Pithecopus hypochondrialis (Orange-legged leaf frog).